The chain runs to 366 residues: Protein RecA (366 aa).

An ATP-binding site is contributed by 77-84 (GPESSGKT). Positions 346 to 366 (IGGPGGEDDDAGGAAGVGDEA) are disordered.

The protein belongs to the RecA family.

It is found in the cytoplasm. In terms of biological role, can catalyze the hydrolysis of ATP in the presence of single-stranded DNA, the ATP-dependent uptake of single-stranded DNA by duplex DNA, and the ATP-dependent hybridization of homologous single-stranded DNAs. It interacts with LexA causing its activation and leading to its autocatalytic cleavage. The polypeptide is Protein RecA (Rhodospirillum rubrum (strain ATCC 11170 / ATH 1.1.1 / DSM 467 / LMG 4362 / NCIMB 8255 / S1)).